A 633-amino-acid chain; its full sequence is 1-deoxy-D-xylulose-5-phosphate synthase (633 aa).

The segment covering 1–12 (MSEPTANLQPAS) has biased composition (polar residues). The disordered stretch occupies residues 1–21 (MSEPTANLQPASRTPLLDRVN). Residues His-86 and 127-129 (GHA) contribute to the thiamine diphosphate site. Asp-158 is a binding site for Mg(2+). Thiamine diphosphate is bound by residues 159 to 160 (GS), Asn-187, and Glu-377. Residue Asn-187 coordinates Mg(2+).

This sequence belongs to the transketolase family. DXPS subfamily. As to quaternary structure, homodimer. It depends on Mg(2+) as a cofactor. Thiamine diphosphate is required as a cofactor.

The catalysed reaction is D-glyceraldehyde 3-phosphate + pyruvate + H(+) = 1-deoxy-D-xylulose 5-phosphate + CO2. Its pathway is metabolic intermediate biosynthesis; 1-deoxy-D-xylulose 5-phosphate biosynthesis; 1-deoxy-D-xylulose 5-phosphate from D-glyceraldehyde 3-phosphate and pyruvate: step 1/1. Catalyzes the acyloin condensation reaction between C atoms 2 and 3 of pyruvate and glyceraldehyde 3-phosphate to yield 1-deoxy-D-xylulose-5-phosphate (DXP). This Deinococcus geothermalis (strain DSM 11300 / CIP 105573 / AG-3a) protein is 1-deoxy-D-xylulose-5-phosphate synthase.